Reading from the N-terminus, the 161-residue chain is Nucleotide-binding protein Rmet_2899 (161 aa).

It belongs to the YajQ family.

Its function is as follows. Nucleotide-binding protein. This is Nucleotide-binding protein Rmet_2899 from Cupriavidus metallidurans (strain ATCC 43123 / DSM 2839 / NBRC 102507 / CH34) (Ralstonia metallidurans).